A 1061-amino-acid chain; its full sequence is Transcription factor GTE10 (1061 aa).

Disordered regions lie at residues 32-56 and 106-152; these read ERMN…NNGV and NDHS…RLNV. Over residues 109–118 the composition is skewed to basic and acidic residues; that stretch reads SCSDGPRRPP. The region spanning 156 to 262 is the Bromo domain; it reads YTVASVMKEC…KYFESGWKSI (107 aa). Residues 304 to 386 enclose the NET domain; that stretch reads KLRVEPAKLV…DYLREKKKSM (83 aa). 4 disordered regions span residues 443–518, 538–558, 606–645, and 710–1033; these read ACRN…LNEL, VPDE…PDKR, KERL…ARQA, and HLGL…GNGK. Positions 448–476 are enriched in low complexity; it reads ESSSSSSSSSESGSSSSDSDSCSSSGSET. A compositionally biased stretch (basic and acidic residues) spans 477–506; sequence DSIKASKPTSREEKKQPGVGIDKKEDDSNS. A coiled-coil region spans residues 588 to 658; sequence PEKLRIEREE…MEKTVEINEG (71 aa). Basic and acidic residues-rich tracts occupy residues 733-755, 770-792, 828-852, 860-883, and 912-929; these read RKVE…RVEG, EAHD…ERQL, EEVH…EDPR, VSEK…REEQ, and LSLD…REEG. The stretch at 852 to 893 forms a coiled coil; that stretch reads RASGNEESVSEKAQDYENQRDEKINQSEREEQLENVLEQESS. Positions 940–949 are enriched in polar residues; the sequence is LVSQKTQDNG. Composition is skewed to basic and acidic residues over residues 952–962 and 990–1002; these read EDEKSINKIEG and GEQK…KGVE.

As to quaternary structure, interacts with TIP/NAC091. As to expression, widely expressed in all tissues.

It is found in the nucleus. Acts as a negative regulator in plant response to changes in environmental conditions through the control of ABA-regulated gene expression. This Arabidopsis thaliana (Mouse-ear cress) protein is Transcription factor GTE10 (GTE10).